The following is a 268-amino-acid chain: Tryptophan synthase alpha chain (268 aa).

Active-site proton acceptor residues include Glu-49 and Asp-60.

Belongs to the TrpA family. Tetramer of two alpha and two beta chains.

It catalyses the reaction (1S,2R)-1-C-(indol-3-yl)glycerol 3-phosphate + L-serine = D-glyceraldehyde 3-phosphate + L-tryptophan + H2O. The protein operates within amino-acid biosynthesis; L-tryptophan biosynthesis; L-tryptophan from chorismate: step 5/5. In terms of biological role, the alpha subunit is responsible for the aldol cleavage of indoleglycerol phosphate to indole and glyceraldehyde 3-phosphate. This is Tryptophan synthase alpha chain from Escherichia coli (strain SE11).